Here is a 546-residue protein sequence, read N- to C-terminus: Probable protein kinase UbiB (546 aa).

One can recognise a Protein kinase domain in the interval 123-501 (DFDETPLASA…SRRQGQARYL (379 aa)). ATP contacts are provided by residues 129 to 137 (LASASIAQV) and Lys152. The active-site Proton acceptor is the Asp287. Transmembrane regions (helical) follow at residues 498–517 (ARYL…FLLT) and 522–541 (IEWG…LGWL).

Belongs to the ABC1 family. UbiB subfamily.

It is found in the cell inner membrane. Its pathway is cofactor biosynthesis; ubiquinone biosynthesis [regulation]. Is probably a protein kinase regulator of UbiI activity which is involved in aerobic coenzyme Q (ubiquinone) biosynthesis. This is Probable protein kinase UbiB from Aeromonas hydrophila subsp. hydrophila (strain ATCC 7966 / DSM 30187 / BCRC 13018 / CCUG 14551 / JCM 1027 / KCTC 2358 / NCIMB 9240 / NCTC 8049).